The primary structure comprises 227 residues: Ras-related protein Rab-3C (227 aa).

Residues S39, G42, K43, T44, S45, T56, S57, S61, and T62 each coordinate GTP. T44 serves as a coordination point for Mg(2+). The short motif at 53-66 is the Switch 1 element; that stretch reads DSFTSAFVSTVGID. 2 residues coordinate Mg(2+): T62 and D85. T86 is subject to Phosphothreonine; by LRRK2. The Switch 2 motif lies at 86 to 104; sequence TAGQERYRTITTAYYRGAM. Positions 88, 143, 144, 146, 174, and 175 each coordinate GTP. Phosphoserine occurs at positions 196 and 198. The tract at residues 202–227 is disordered; the sequence is DPAITAAKQSTRLKETPPPPQPNCGC. T206 carries the phosphothreonine modification. A compositionally biased stretch (pro residues) spans 217–227; that stretch reads TPPPPQPNCGC. S-geranylgeranyl cysteine attachment occurs at residues C225 and C227. The residue at position 227 (C227) is a Cysteine methyl ester.

This sequence belongs to the small GTPase superfamily. Rab family. As to quaternary structure, interacts with RIMS1, RIMS2, RPH3A and RPH3AL. Interacts with GDI2, CHM and CHML; phosphorylation at Thr-86 disrupts these interactions. Interacts with MADD (via uDENN domain); the GTP-bound form is preferred for interaction. It depends on Mg(2+) as a cofactor. Phosphorylation of Thr-86 in the switch II region by LRRK2 prevents the association of RAB regulatory proteins, including CHM, CHML and RAB GDP dissociation inhibitor GDI2.

It localises to the cell membrane. It catalyses the reaction GTP + H2O = GDP + phosphate + H(+). Regulated by guanine nucleotide exchange factors (GEFs) which promote the exchange of bound GDP for free GTP. Regulated by GTPase activating proteins (GAPs) which increase the GTP hydrolysis activity. Inhibited by GDP dissociation inhibitors (GDIs) which prevent Rab-GDP dissociation. Its function is as follows. The small GTPases Rab are key regulators of intracellular membrane trafficking, from the formation of transport vesicles to their fusion with membranes. Rabs cycle between an inactive GDP-bound form and an active GTP-bound form that is able to recruit to membranes different sets of downstream effectors directly responsible for vesicle formation, movement, tethering and fusion. This is Ras-related protein Rab-3C from Mus musculus (Mouse).